Consider the following 444-residue polypeptide: Adenylosuccinate synthetase (444 aa).

GTP contacts are provided by residues 13–19 (GDEGKGK) and 41–43 (GHT). Catalysis depends on Asp-14, which acts as the Proton acceptor. Asp-14 and Gly-41 together coordinate Mg(2+). IMP contacts are provided by residues 14 to 17 (DEGK), 39 to 42 (NAGH), Thr-129, Arg-143, Gln-224, Thr-239, and Arg-303. His-42 (proton donor) is an active-site residue. 299 to 305 (TTTGRRR) lines the substrate pocket. GTP-binding positions include Arg-305, 331–333 (KLD), and 413–415 (SLG).

It belongs to the adenylosuccinate synthetase family. Homodimer. It depends on Mg(2+) as a cofactor.

The protein localises to the cytoplasm. The enzyme catalyses IMP + L-aspartate + GTP = N(6)-(1,2-dicarboxyethyl)-AMP + GDP + phosphate + 2 H(+). It participates in purine metabolism; AMP biosynthesis via de novo pathway; AMP from IMP: step 1/2. Plays an important role in the de novo pathway of purine nucleotide biosynthesis. Catalyzes the first committed step in the biosynthesis of AMP from IMP. This is Adenylosuccinate synthetase from Synechocystis sp. (strain ATCC 27184 / PCC 6803 / Kazusa).